We begin with the raw amino-acid sequence, 307 residues long: 4-hydroxybenzoate octaprenyltransferase (307 aa).

The next 7 helical transmembrane spans lie at A27–F47, W50–I70, L101–L121, C142–F162, A179–Y199, L239–L259, and F285–W305.

Belongs to the UbiA prenyltransferase family. Mg(2+) serves as cofactor.

It localises to the cell inner membrane. The enzyme catalyses all-trans-octaprenyl diphosphate + 4-hydroxybenzoate = 4-hydroxy-3-(all-trans-octaprenyl)benzoate + diphosphate. It functions in the pathway cofactor biosynthesis; ubiquinone biosynthesis. In terms of biological role, catalyzes the prenylation of para-hydroxybenzoate (PHB) with an all-trans polyprenyl group. Mediates the second step in the final reaction sequence of ubiquinone-8 (UQ-8) biosynthesis, which is the condensation of the polyisoprenoid side chain with PHB, generating the first membrane-bound Q intermediate 3-octaprenyl-4-hydroxybenzoate. In Methylibium petroleiphilum (strain ATCC BAA-1232 / LMG 22953 / PM1), this protein is 4-hydroxybenzoate octaprenyltransferase.